A 378-amino-acid polypeptide reads, in one-letter code: Putative glutamate--cysteine ligase 2 (378 aa).

This sequence belongs to the glutamate--cysteine ligase type 2 family. YbdK subfamily.

It carries out the reaction L-cysteine + L-glutamate + ATP = gamma-L-glutamyl-L-cysteine + ADP + phosphate + H(+). Functionally, ATP-dependent carboxylate-amine ligase which exhibits weak glutamate--cysteine ligase activity. The chain is Putative glutamate--cysteine ligase 2 from Bdellovibrio bacteriovorus (strain ATCC 15356 / DSM 50701 / NCIMB 9529 / HD100).